The sequence spans 435 residues: GTPase Obg (435 aa).

Positions methionine 1–isoleucine 159 constitute an Obg domain. The 170-residue stretch at alanine 160–phenylalanine 329 folds into the OBG-type G domain. GTP-binding positions include glycine 166–serine 173, phenylalanine 191–asparagine 195, aspartate 212–glycine 215, asparagine 282–aspartate 285, and serine 310–leucine 312. Mg(2+) is bound by residues serine 173 and threonine 193. One can recognise an OCT domain in the interval lysine 357–glutamate 435.

This sequence belongs to the TRAFAC class OBG-HflX-like GTPase superfamily. OBG GTPase family. Monomer. The cofactor is Mg(2+).

It is found in the cytoplasm. Functionally, an essential GTPase which binds GTP, GDP and possibly (p)ppGpp with moderate affinity, with high nucleotide exchange rates and a fairly low GTP hydrolysis rate. Plays a role in control of the cell cycle, stress response, ribosome biogenesis and in those bacteria that undergo differentiation, in morphogenesis control. This chain is GTPase Obg, found in Ureaplasma parvum serovar 3 (strain ATCC 27815 / 27 / NCTC 11736).